The sequence spans 351 residues: UDP-N-acetylenolpyruvoylglucosamine reductase (351 aa).

Residues 25–196 (HIQAQARWLL…AAVEFRLPLL (172 aa)) enclose the FAD-binding PCMH-type domain. The active site involves Arg173. The Proton donor role is filled by Ser246. Residue Glu343 is part of the active site.

Belongs to the MurB family. FAD serves as cofactor.

The protein resides in the cytoplasm. The enzyme catalyses UDP-N-acetyl-alpha-D-muramate + NADP(+) = UDP-N-acetyl-3-O-(1-carboxyvinyl)-alpha-D-glucosamine + NADPH + H(+). The protein operates within cell wall biogenesis; peptidoglycan biosynthesis. In terms of biological role, cell wall formation. In Xylella fastidiosa (strain 9a5c), this protein is UDP-N-acetylenolpyruvoylglucosamine reductase.